Here is a 238-residue protein sequence, read N- to C-terminus: Urease subunit alpha (238 aa).

Positions 1–102 (MKLTPKELDK…LVTVHTPIEA (102 aa)) are urease gamma. The segment at 103–238 (NGKLVPGELF…DDNYVKTIKE (136 aa)) is urease beta.

This sequence in the N-terminal section; belongs to the urease gamma subunit family. It in the C-terminal section; belongs to the urease beta subunit family. In terms of assembly, heterohexamer of 3 UreA (alpha) and 3 UreB (beta) subunits.

Its subcellular location is the cytoplasm. The enzyme catalyses urea + 2 H2O + H(+) = hydrogencarbonate + 2 NH4(+). It participates in nitrogen metabolism; urea degradation; CO(2) and NH(3) from urea (urease route): step 1/1. The protein is Urease subunit alpha of Helicobacter pylori (strain P12).